A 498-amino-acid polypeptide reads, in one-letter code: Pre-glycoprotein polyprotein GP complex (498 aa).

The N-myristoyl glycine; by host moiety is linked to residue G2. Residues 2–17 (GQIVTMFEALPHIIDE) are Extracellular-facing. Residues 18 to 33 (VINIVIIVLIVITGIK) traverse the membrane as a helical segment. The Cytoplasmic segment spans residues 34 to 58 (AVYNFATCGIFALISFLLLAGRSCG). C57 lines the Zn(2+) pocket. Topologically, residues 59-438 (MYGLKGPDIY…QGSTPLALMD (380 aa)) are extracellular. N-linked (GlcNAc...) asparagine; by host glycosylation is found at N85, N95, N114, N124, and N171. 6 disulfides stabilise this stretch: C92–C239, C123–C160, C184–C220, C285–C298, C307–C316, and C370–C391. N232 is a glycosylation site (N-linked (GlcNAc...) asparagine; by host). 3 N-linked (GlcNAc...) asparagine; by host glycosylation sites follow: N371, N396, and N401. A helical membrane pass occupies residues 439 to 459 (LLMFSTSAYLVSIFLHLVKIP). Over 460 to 498 (THRHIKGGSCPKPHRLTNKGICSCGAFKVPGVKTVWKRR) the chain is Cytoplasmic. Zn(2+)-binding residues include H461, H463, C469, H473, C481, and C483.

The protein belongs to the arenaviridae GPC protein family. In terms of assembly, interacts with glycoprotein G2. Part of the GP complex (GP-C) together with glycoprotein G1 and glycoprotein G2. The GP-complex interacts with protein Z, which interacts with ribonucleocapsid; these interactions may induce virion budding. As to quaternary structure, homotrimer; disulfide-linked. In pre-fusion state, G1 homotrimers bind G2 homotrimers via ionic interactions. Part of the GP complex (GP-C) together with glycoprotein G2 and the stable signal peptide. Interacts with the primary host receptor DAG1 on the cell surface. The GP-complex interacts with protein Z, which interacts with ribonucleocapsid; these interactions may induce virion budding. Homotrimer. Interacts with the stable signal peptide. In pre-fusion state, G2 homotrimers bind G1 homotrimers via ionic interactions. Part of the GP complex (GP-C) together with glycoprotein G1 and the stable signal peptide. Acidification in the endosome triggers rearrangements, which ultimately leads to a 6 helix bundle formed by the two heptad repeat domains (HR1 and HR2) in post-fusion state. The GP-complex interacts with protein Z, which interacts with ribonucleocapsid; these interactions may induce virion budding. In terms of processing, specific enzymatic cleavages in vivo yield mature proteins. GP-C polyprotein is cleaved in the endoplasmic reticulum by the host protease MBTPS1. Only cleaved glycoprotein is incorporated into virions. The SSP remains stably associated with the GP complex following cleavage by signal peptidase and plays crucial roles in the trafficking of GP through the secretory pathway. Post-translationally, myristoylation is necessary for GP2-mediated fusion activity. Inhibition of host myristoylation by the compound DDD85646 leads to the abrogation of GP2-mediated fusion upon exposure to low pH and inhibition of viral multiplication.

Its subcellular location is the virion membrane. It localises to the host endoplasmic reticulum membrane. The protein localises to the host Golgi apparatus membrane. It is found in the host cell membrane. Its function is as follows. Functions as a cleaved signal peptide that is retained as the third component of the GP complex (GP-C). Helps to stabilize the spike complex in its native conformation. The SSP is required for efficient glycoprotein expression, post-translational maturation cleavage of G1 and G2, glycoprotein transport to the cell surface plasma membrane, formation of infectious virus particles, and acid pH-dependent glycoprotein-mediated cell fusion. Forms the virion spikes together with glycoprotein G2. The glycoprotein spike trimers are connected to the underlying matrix. Interacts with the host receptor. Mediates virus attachment to the host primary receptor alpha-dystroglycan DAG1 (alpha-DG) at the cell surface. Down-modulates host DAG1. In terms of biological role, forms the virion spikes together with glycoprotein G1. The glycoprotein spike trimers are connected to the underlying matrix. Class I viral fusion protein that directs fusion of viral and host endosomal membranes, leading to delivery of the nucleocapsid into the cytoplasm. Membrane fusion is mediated by irreversible conformational changes induced by acidification. This is Pre-glycoprotein polyprotein GP complex from Homo sapiens (Human).